Consider the following 431-residue polypeptide: MITDRVSDYLEKIEKSDVNAFIDVNSEKVLKEAEELEKNDYLKNKPLYGKIVAVKSNINVKGYKISCASKTLEKYTGTYDATVVKKLRLQGALIVGMTNMDEFASGSSGETSYFGPTKNPAAMDRIPGGSSSGSAAAVAADLCDMAIGSDTGGSIRNPASHCGIVGFKPSYGVVSRQGLCDLAMSFDQIGPLTKNAEDALVLTNAIKGIDRSDSTSLETPKFEKKDISNYKVGVVKEFMDVTDEKIRNEIEKGIEVFKDMGCKIVDLSYKYIDLALPTYYLINYVEFFSATRKYDGRRYGEFIEEACGEEVLRRILIGKHISEQEFSGKYYKKALQARKAMKKEMLGLFNSADLIVGPTVPKLPHKLGEDLSPMEMYAYDVLTVPTNICGICSGVVRCGNIQGVPVGLQIQGAPLEDEKVLSAMIEFEKNY.

Active-site charge relay system residues include Lys-55 and Ser-130. Ser-154 functions as the Acyl-ester intermediate in the catalytic mechanism.

It belongs to the amidase family. GatA subfamily. As to quaternary structure, heterotrimer of A, B and C subunits.

The enzyme catalyses L-glutamyl-tRNA(Gln) + L-glutamine + ATP + H2O = L-glutaminyl-tRNA(Gln) + L-glutamate + ADP + phosphate + H(+). Its function is as follows. Allows the formation of correctly charged Gln-tRNA(Gln) through the transamidation of misacylated Glu-tRNA(Gln) in organisms which lack glutaminyl-tRNA synthetase. The reaction takes place in the presence of glutamine and ATP through an activated gamma-phospho-Glu-tRNA(Gln). This is Glutamyl-tRNA(Gln) amidotransferase subunit A from Methanococcus maripaludis (strain C6 / ATCC BAA-1332).